Here is a 431-residue protein sequence, read N- to C-terminus: Protein SHQ1 homolog (431 aa).

Belongs to the SHQ1 family.

Its function is as follows. Required for the quantitative accumulation of H/ACA ribonucleoproteins (RNPs). In Caenorhabditis elegans, this protein is Protein SHQ1 homolog.